Consider the following 84-residue polypeptide: MKVTLIAILTRAAVLVLHTTAAEELEESQLMEVSMPDTELAAVDEERLFECSVSCEIEKEGNKDCKKKKCKGGWKCKFNMCVKV.

The first 22 residues, 1 to 22 (MKVTLIAILTRAAVLVLHTTAA), serve as a signal peptide directing secretion. The propeptide occupies 23-47 (EELEESQLMEVSMPDTELAAVDEER). Cystine bridges form between cysteine 51–cysteine 65, cysteine 55–cysteine 76, and cysteine 70–cysteine 81.

This sequence belongs to the neurotoxin 12 (Hwtx-2) family. 02 (Hwtx-2) subfamily. As to expression, expressed by the venom gland.

It localises to the secreted. In terms of biological role, postsynaptic neurotoxin. The sequence is that of U4-theraphotoxin-Hhn1a from Cyriopagopus hainanus (Chinese bird spider).